The primary structure comprises 398 residues: UDP-D-apiose/UDP-D-xylose synthase (398 aa).

57–88 is an NAD(+) binding site; sequence DVYCDKIRHLVDPAPPHLHGRISFHRLNIKND. Arg190 lines the substrate pocket. The active-site Proton acceptor is the Tyr193. 193–197 lines the NAD(+) pocket; the sequence is YACAK. Asn222 is a substrate binding site. Residue Arg243 participates in NAD(+) binding. Substrate-binding positions include 244–248, 261–268, and 345–349; these read VLACF, VDGGQSQR, and DSDKR.

It belongs to the NAD(P)-dependent epimerase/dehydratase family. Homodimer. It depends on NAD(+) as a cofactor.

The protein resides in the cytoplasm. Catalyzes the conversion of UDP-D-glucuronate to a mixture of UDP-D-apiose and UDP-D-xylose. D-Apiose (3-C-hydroxymethyl-d-erythrose) is the only plant cell wall monosaccharide with a branched carbon skeleton and found in rhamnogalacturonan II (RG-II), apiogalacturonan, and several apioglycosides. The chain is UDP-D-apiose/UDP-D-xylose synthase from Oryza sativa subsp. japonica (Rice).